Here is a 433-residue protein sequence, read N- to C-terminus: 26S proteasome regulatory subunit 7 (433 aa).

The tract at residues Met-1 to Arg-23 is disordered. The segment covering Asp-8–Arg-23 has biased composition (basic and acidic residues). Residue Gly-216–Thr-223 coordinates ATP.

Belongs to the AAA ATPase family. Phosphorylated. Dephosphorylated by ublcp1 which impairs psmc2 ATPase activity and disrupts 26S proteasome assembly.

It is found in the cytoplasm. The protein localises to the nucleus. Its function is as follows. The 26S proteasome is involved in the ATP-dependent degradation of ubiquitinated proteins. The regulatory (or ATPase) complex confers ATP dependency and substrate specificity to the 26S complex. The sequence is that of 26S proteasome regulatory subunit 7 (psmc2) from Xenopus laevis (African clawed frog).